A 768-amino-acid polypeptide reads, in one-letter code: Pentatricopeptide repeat-containing protein At3g53360, mitochondrial (768 aa).

The N-terminal 70 residues, M1 to Y70, are a transit peptide targeting the mitochondrion. 18 PPR repeats span residues T30–N60, R66–Y100, D101–R131, N132–P166, D167–S201, H202–K232, D233–H267, N269–G303, N304–P334, D335–P369, D370–A404, D405–N435, D437–P471, D472–P506, E507–R537, D538–P572, N573–P608, and T609–E639. Residues V644 to E719 are type E motif. The interval D720–L750 is type E(+) motif.

The protein belongs to the PPR family. PCMP-E subfamily.

Its subcellular location is the mitochondrion. This is Pentatricopeptide repeat-containing protein At3g53360, mitochondrial (PCMP-E86) from Arabidopsis thaliana (Mouse-ear cress).